The primary structure comprises 449 residues: MKTTHFSSSSSSDRRIGALLRHLNSGSDSDNLSSLYASPTSGGTGGSVFSHLVQAPEDPILGVTVAYNKDPSPVKLNLGVGAYRTEEGKPLVLNVVRKAEQQLINDRTRIKEYLPIVGLVEFNKLSAKLILGADSPAIRENRITTVECLSGTGSLRVGGEFLAKHYHQKTIYITQPTWGNHPKIFTLAGLTVKTYRYYDPATRGLNFQGLLEDLGAAAPGSIVLLHACAHNPTGVDPTIQQWEQIRKLMRSKGLMPFFDSAYQGFASGSLDTDAKPIRMFVADGGECLVAQSYAKNMGLYGERVGALSIVCKSADVAGRVESQLKLVIRPMYSSPPIHGASIVAVILRDKNLFNEWTLELKAMADRIISMRKQLFEALRTRGTPGDWSHIIKQIGMFTFTGLNPAQVSFMTKEYHIYMTSDGRISMAGLSSKTVPHLADAIHAVVTKAV.

The transit peptide at 1–43 directs the protein to the chloroplast; that stretch reads MKTTHFSSSSSSDRRIGALLRHLNSGSDSDNLSSLYASPTSGG. L-aspartate contacts are provided by Gly81, Trp178, and Asn231. The residue at position 295 (Lys295) is an N6-(pyridoxal phosphate)lysine. Arg423 contacts L-aspartate.

This sequence belongs to the class-I pyridoxal-phosphate-dependent aminotransferase family. Homodimer. Pyridoxal 5'-phosphate is required as a cofactor. As to expression, expressed in roots, cauline leaves, flowers, hypocotyl epidermis and root hair cells.

It localises to the plastid. The protein resides in the chloroplast. It carries out the reaction L-aspartate + 2-oxoglutarate = oxaloacetate + L-glutamate. In terms of biological role, amino acid aminotransferase important for the metabolism of amino acids and Krebs-cycle related organic acids. No activity with D-Asp or D-Ala as amino donors. In plants, it is involved in nitrogen metabolism and in aspects of carbon and energy metabolism. The polypeptide is Aspartate aminotransferase 3, chloroplastic (ASP3) (Arabidopsis thaliana (Mouse-ear cress)).